A 576-amino-acid polypeptide reads, in one-letter code: 5'-nucleotidase (576 aa).

The first 28 residues, 1-28 (MRPAAAKVPKWLLLALSALLPQWPAASA), serve as a signal peptide directing secretion. The Zn(2+) site is built by aspartate 38 and histidine 40. Cysteine 53 and cysteine 59 are joined by a disulfide. N-linked (GlcNAc...) asparagine glycosylation occurs at asparagine 55. Residues aspartate 87, asparagine 119, histidine 222, and histidine 245 each contribute to the Zn(2+) site. N-linked (GlcNAc...) asparagine glycosylation is found at asparagine 313 and asparagine 335. Cystine bridges form between cysteine 355–cysteine 360 and cysteine 367–cysteine 389. Residue arginine 356 coordinates AMP. Residue arginine 356 coordinates IMP. The AMP site is built by asparagine 392 and arginine 397. 2 residues coordinate IMP: asparagine 392 and arginine 397. Asparagine 405 carries N-linked (GlcNAc...) asparagine glycosylation. Phenylalanine 419 is a binding site for AMP. Phenylalanine 419 serves as a coordination point for IMP. A disulfide bond links cysteine 478 and cysteine 481. AMP-binding residues include tyrosine 502 and aspartate 508. IMP contacts are provided by tyrosine 502 and aspartate 508. Serine 551 carries the GPI-anchor amidated serine lipid modification. The propeptide at 552–576 (AASHYQGSFPLVILSFWAMILILYQ) is removed in mature form.

The protein belongs to the 5'-nucleotidase family. Homodimer. Requires Zn(2+) as cofactor. In terms of tissue distribution, expressed at high levels in the placenta, kidney, lung and stomach and at lower levels in the thymus, spleen, skeletal muscle and esophagus.

The protein resides in the cell membrane. It catalyses the reaction a ribonucleoside 5'-phosphate + H2O = a ribonucleoside + phosphate. It carries out the reaction a 2'-deoxyribonucleoside 5'-phosphate + H2O = a 2'-deoxyribonucleoside + phosphate. The catalysed reaction is dTMP + H2O = thymidine + phosphate. The enzyme catalyses CMP + H2O = cytidine + phosphate. It catalyses the reaction IMP + H2O = inosine + phosphate. It carries out the reaction AMP + H2O = adenosine + phosphate. The catalysed reaction is GMP + H2O = guanosine + phosphate. The enzyme catalyses UMP + H2O = uridine + phosphate. It catalyses the reaction dAMP + H2O = 2'-deoxyadenosine + phosphate. It carries out the reaction dCMP + H2O = 2'-deoxycytidine + phosphate. Functionally, catalyzes the hydrolysis of nucleotide monophosphates, releasing inorganic phosphate and the corresponding nucleoside. Hydrolyzes IMP. Shows a preference for ribonucleotide monophosphates over their equivalent deoxyribose forms. Although AMP is the preferred substrate can also hydrolyze UMP, GMP, CMP, dAMP, dCMP, dTMP, NAD and NMN. This Mus musculus (Mouse) protein is 5'-nucleotidase (Nt5e).